A 914-amino-acid polypeptide reads, in one-letter code: Isoleucine--tRNA ligase (914 aa).

The short motif at 57-67 is the 'HIGH' region element; that stretch reads PYANGQIHMGH. Position 554 (E554) interacts with L-isoleucyl-5'-AMP. The 'KMSKS' region signature appears at 595 to 599; sequence KMSKS. K598 contributes to the ATP binding site. C883, C886, C904, and C907 together coordinate Zn(2+).

Belongs to the class-I aminoacyl-tRNA synthetase family. IleS type 1 subfamily. As to quaternary structure, monomer. Zn(2+) is required as a cofactor.

The protein resides in the cytoplasm. The catalysed reaction is tRNA(Ile) + L-isoleucine + ATP = L-isoleucyl-tRNA(Ile) + AMP + diphosphate. Functionally, catalyzes the attachment of isoleucine to tRNA(Ile). As IleRS can inadvertently accommodate and process structurally similar amino acids such as valine, to avoid such errors it has two additional distinct tRNA(Ile)-dependent editing activities. One activity is designated as 'pretransfer' editing and involves the hydrolysis of activated Val-AMP. The other activity is designated 'posttransfer' editing and involves deacylation of mischarged Val-tRNA(Ile). The chain is Isoleucine--tRNA ligase from Macrococcus caseolyticus (strain JCSC5402) (Macrococcoides caseolyticum).